The chain runs to 688 residues: G protein-coupled receptor kinase 3 (688 aa).

The tract at residues 1–190 (MADLEAVLAD…ELNIHLTMND (190 aa)) is N-terminal. The RGS domain maps to 54 to 175 (TFDKIFNQRI…MESDKFTRFC (122 aa)). The 263-residue stretch at 191–453 (FSVHRIIGRG…AQELKTHDFF (263 aa)) folds into the Protein kinase domain. Residues 197–205 (IGRGGFGEV) and Lys220 each bind ATP. Asp317 (proton acceptor) is an active-site residue. Residues 454–521 (RGIDWQHVYL…VISERWQQEV (68 aa)) form the AGC-kinase C-terminal domain. The region spanning 558–652 (DCIVHGYMLK…WKKELTETFM (95 aa)) is the PH domain.

The protein belongs to the protein kinase superfamily. AGC Ser/Thr protein kinase family. GPRK subfamily. In terms of assembly, interacts with GIT1. In terms of processing, ubiquitinated. As to expression, ubiquitous; brain, spleen &gt; heart, lung &gt; kidney.

The protein localises to the postsynapse. It is found in the presynapse. The enzyme catalyses [beta-adrenergic receptor] + ATP = [beta-adrenergic receptor]-phosphate + ADP + H(+). Specifically phosphorylates the agonist-occupied form of the beta-adrenergic and closely related receptors. The polypeptide is G protein-coupled receptor kinase 3 (Bos taurus (Bovine)).